Here is a 506-residue protein sequence, read N- to C-terminus: Probable alpha-L-arabinofuranosidase B (506 aa).

An N-terminal signal peptide occupies residues 1–26 (MSSGLSLERACAVALGIVASASLVAA). The interval 27 to 343 (GPCDIYSSGG…ADIVAAKYAI (317 aa)) is catalytic. 3 cysteine pairs are disulfide-bonded: Cys29-Cys39, Cys89-Cys94, and Cys184-Cys185. An N-linked (GlcNAc...) asparagine glycan is attached at Asn91. Residue Asp227 participates in substrate binding. The Nucleophile role is filled by Glu229. Residues Asn230 and Gly304 each coordinate substrate. Asp305 (proton donor) is an active-site residue. Positions 344–506 (ASLTSGPALT…VSWVVSTGFA (163 aa)) are ABD. Cys409 and Cys447 are joined by a disulfide. Residues His424, Asn426, Phe427, Asp443, His471, Glu473, Leu476, and Asp496 each contribute to the substrate site.

The protein belongs to the glycosyl hydrolase 54 family.

The protein resides in the secreted. The enzyme catalyses Hydrolysis of terminal non-reducing alpha-L-arabinofuranoside residues in alpha-L-arabinosides.. It functions in the pathway glycan metabolism; L-arabinan degradation. Functionally, alpha-L-arabinofuranosidase involved in the degradation of arabinoxylan, a major component of plant hemicellulose. Able to hydrolyze 1,5-, 1,3- and 1,2-alpha-linkages not only in L-arabinofuranosyl oligosaccharides, but also in polysaccharides containing terminal non-reducing L-arabinofuranoses in side chains, like L-arabinan, arabinogalactan and arabinoxylan. The sequence is that of Probable alpha-L-arabinofuranosidase B (abfB) from Aspergillus flavus (strain ATCC 200026 / FGSC A1120 / IAM 13836 / NRRL 3357 / JCM 12722 / SRRC 167).